A 208-amino-acid polypeptide reads, in one-letter code: Inactive ribonuclease-like protein 10 (208 aa).

A signal peptide spans 1–24 (MKVTLVHLLFMMLLLLLGLGLGLG). Residues Asn-125 and Asn-147 are each glycosylated (N-linked (GlcNAc...) asparagine).

It belongs to the pancreatic ribonuclease family. Post-translationally, the N-terminus is blocked. Glycosylated. Male-specific expression in proximal caput of the epididymis (at protein level).

The protein localises to the secreted. Its function is as follows. Secreted proximal epididymal protein required for post-testicular sperm maturation and male fertility. May be involved in sperm adhesion to the egg zona pellucida. Does not have ribonuclease activity. The sequence is that of Inactive ribonuclease-like protein 10 (Rnase10) from Mus musculus (Mouse).